We begin with the raw amino-acid sequence, 342 residues long: Holliday junction branch migration complex subunit RuvB (342 aa).

The large ATPase domain (RuvB-L) stretch occupies residues 1 to 182 (MRIEALNTAP…FGINSRLDYY (182 aa)). ATP contacts are provided by residues Ile-21, Arg-22, Gly-63, Lys-66, Thr-67, Thr-68, 129-131 (EDY), Arg-172, Tyr-182, and Arg-219. Thr-67 provides a ligand contact to Mg(2+). The interval 183–253 (SPELLQSIIV…VARRTLESLE (71 aa)) is small ATPAse domain (RuvB-S). Residues 256 to 342 (EGGLDDMDKK…DHGPLFDHNS (87 aa)) form a head domain (RuvB-H) region. Positions 311 and 316 each coordinate DNA.

The protein belongs to the RuvB family. In terms of assembly, homohexamer. Forms an RuvA(8)-RuvB(12)-Holliday junction (HJ) complex. HJ DNA is sandwiched between 2 RuvA tetramers; dsDNA enters through RuvA and exits via RuvB. An RuvB hexamer assembles on each DNA strand where it exits the tetramer. Each RuvB hexamer is contacted by two RuvA subunits (via domain III) on 2 adjacent RuvB subunits; this complex drives branch migration. In the full resolvosome a probable DNA-RuvA(4)-RuvB(12)-RuvC(2) complex forms which resolves the HJ.

The protein localises to the cytoplasm. The enzyme catalyses ATP + H2O = ADP + phosphate + H(+). The RuvA-RuvB-RuvC complex processes Holliday junction (HJ) DNA during genetic recombination and DNA repair, while the RuvA-RuvB complex plays an important role in the rescue of blocked DNA replication forks via replication fork reversal (RFR). RuvA specifically binds to HJ cruciform DNA, conferring on it an open structure. The RuvB hexamer acts as an ATP-dependent pump, pulling dsDNA into and through the RuvAB complex. RuvB forms 2 homohexamers on either side of HJ DNA bound by 1 or 2 RuvA tetramers; 4 subunits per hexamer contact DNA at a time. Coordinated motions by a converter formed by DNA-disengaged RuvB subunits stimulates ATP hydrolysis and nucleotide exchange. Immobilization of the converter enables RuvB to convert the ATP-contained energy into a lever motion, pulling 2 nucleotides of DNA out of the RuvA tetramer per ATP hydrolyzed, thus driving DNA branch migration. The RuvB motors rotate together with the DNA substrate, which together with the progressing nucleotide cycle form the mechanistic basis for DNA recombination by continuous HJ branch migration. Branch migration allows RuvC to scan DNA until it finds its consensus sequence, where it cleaves and resolves cruciform DNA. The sequence is that of Holliday junction branch migration complex subunit RuvB from Chlorobaculum parvum (strain DSM 263 / NCIMB 8327) (Chlorobium vibrioforme subsp. thiosulfatophilum).